The sequence spans 332 residues: Torsin-1A (332 aa).

An N-terminal signal peptide occupies residues 1–20; it reads MKLGRAVLGLLLLAPSVVQA. The tract at residues 91–251 is interaction with SNAPIN; the sequence is KPKKPLTLSL…VSVFNNKNSG (161 aa). 102-109 is an ATP binding site; sequence GWTGTGKN. N-linked (GlcNAc...) (high mannose) asparagine glycans are attached at residues N143 and N158. The interval 251–332 is interaction with KLC1; that stretch reads GFWHSSLIDR…FTKLDYYYDD (82 aa). Positions 312 to 332 are interaction with SYNE3; it reads RVFSDKGCKTVFTKLDYYYDD.

Belongs to the ClpA/ClpB family. Torsin subfamily. Homohexamer. Interacts with TOR1B; the interaction may be specific of neural tissues. Interacts (ATP-bound) with TOR1AIP1 and TOR1AIP2; the interactions induce ATPase activity. Interacts with KLHL14; preferentially when ATP-free. Interacts with KLC1 (via TPR repeats); the interaction associates TOR1A with the kinesin oligomeric complex. Interacts with COPS4; the interaction associates TOR1A with the CSN complex. Interacts with SNAPIN; the interaction is direct and associates SNAPIN with the CSN complex. Interacts with STON2. Interacts (ATP-bound) with SYNE3 (via KASH domain); the interaction is required for SYNE3 nuclear envelope localization. Interacts with VIM; the interaction associates TOR1A with the cytoskeleton. Interacts with PLEC. Interacts (ATP-bound) with SLC6A3; regulates SLC6A3 transport to the plasma membrane. In terms of processing, N-glycosylated. Widely expressed. Highest levels in kidney and liver. In the brain, high levels found in the dopaminergic neurons of the substantia nigra pars compacta, as well as in the neocortex, hippocampus and cerebellum. Also highly expressed in the spinal cord.

It localises to the endoplasmic reticulum lumen. The protein localises to the nucleus membrane. Its subcellular location is the cell projection. The protein resides in the growth cone. It is found in the cytoplasmic vesicle membrane. It localises to the cytoplasmic vesicle. The protein localises to the secretory vesicle. Its subcellular location is the synaptic vesicle. The protein resides in the cytoplasm. It is found in the cytoskeleton. The catalysed reaction is ATP + H2O = ADP + phosphate + H(+). In terms of biological role, protein with chaperone functions important for the control of protein folding, processing, stability and localization as well as for the reduction of misfolded protein aggregates. Involved in the regulation of synaptic vesicle recycling, controls STON2 protein stability in collaboration with the COP9 signalosome complex (CSN). In the nucleus, may link the cytoskeleton with the nuclear envelope, this mechanism seems to be crucial for the control of nuclear polarity, cell movement and, specifically in neurons, nuclear envelope integrity. Participates in the cellular trafficking and may regulate the subcellular location of multipass membrane proteins such as the dopamine transporter SLC6A3, leading to the modulation of dopamine neurotransmission. In the endoplasmic reticulum, plays a role in the quality control of protein folding by increasing clearance of misfolded proteins such as SGCE variants or holding them in an intermediate state for proper refolding. May have a redundant function with TOR1B in non-neural tissues. The sequence is that of Torsin-1A (TOR1A) from Homo sapiens (Human).